Reading from the N-terminus, the 1568-residue chain is Plexin-C1 (1568 aa).

An N-terminal signal peptide occupies residues 1-34 (MEVSRRKAPPRPPRPAAPLPLLAYLLALAAPGRG). The region spanning 35-452 (ADEPVWRSEQ…AGKEVRRIRV (418 aa)) is the Sema domain. The Extracellular portion of the chain corresponds to 35-944 (ADEPVWRSEQ…YVEQESVPST (910 aa)). Cys-64 and Cys-87 are joined by a disulfide. Asn-86, Asn-141, and Asn-149 each carry an N-linked (GlcNAc...) asparagine glycan. 3 disulfides stabilise this stretch: Cys-156–Cys-194, Cys-226–Cys-354, and Cys-283–Cys-329. Residues Asn-241 and Asn-252 are each glycosylated (N-linked (GlcNAc...) asparagine). N-linked (GlcNAc...) asparagine glycosylation is found at Asn-386 and Asn-407. 4 cysteine pairs are disulfide-bonded: Cys-455/Cys-472, Cys-461/Cys-506, Cys-464/Cys-481, and Cys-475/Cys-487. Asn-548, Asn-582, Asn-653, Asn-692, Asn-771, Asn-796, Asn-821, Asn-871, and Asn-890 each carry an N-linked (GlcNAc...) asparagine glycan. The chain crosses the membrane as a helical span at residues 945 to 965 (WYFLIVLPVLLVIVIFAAVGV). Residues 966 to 1568 (TRHKSKELSR…FDEKKKCKWM (603 aa)) are Cytoplasmic-facing. Residue Ser-978 is modified to Phosphoserine.

It belongs to the plexin family. Monomer. Homodimer. Interacts with SEMA7A. In terms of processing, N-glycosylated. In terms of tissue distribution, detected in heart, brain, lung, spleen and placenta.

The protein localises to the membrane. Functionally, receptor for SEMA7A, for smallpox semaphorin A39R, vaccinia virus semaphorin A39R and for herpesvirus Sema protein. Binding of semaphorins triggers cellular responses leading to the rearrangement of the cytoskeleton and to secretion of IL6 and IL8. In Homo sapiens (Human), this protein is Plexin-C1 (PLXNC1).